The chain runs to 473 residues: Photosystem II CP43 reaction center protein (473 aa).

Positions 1-14 (MKTLYSLRRFYPVE) are excised as a propeptide. At threonine 15 the chain carries N-acetylthreonine. Position 15 is a phosphothreonine (threonine 15). 5 helical membrane passes run 69 to 93 (LFEVAHFVPEKPMYEQGLILLPHLA), 134 to 155 (LLGPETLEESFPFFGYVWKDRN), 178 to 200 (KALYFGGVYDTWAPGGGDVRKIT), 255 to 275 (KPFAWARRALVWSGEAYLSYS), and 291 to 312 (WFNNTAYPSEFYGPTGPEASQA). Glutamate 367 provides a ligand contact to [CaMn4O5] cluster. The chain crosses the membrane as a helical span at residues 447-471 (RARAAAAGFEKGIDRDFEPVLSMTP).

It belongs to the PsbB/PsbC family. PsbC subfamily. In terms of assembly, PSII is composed of 1 copy each of membrane proteins PsbA, PsbB, PsbC, PsbD, PsbE, PsbF, PsbH, PsbI, PsbJ, PsbK, PsbL, PsbM, PsbT, PsbX, PsbY, PsbZ, Psb30/Ycf12, at least 3 peripheral proteins of the oxygen-evolving complex and a large number of cofactors. It forms dimeric complexes. It depends on Binds multiple chlorophylls and provides some of the ligands for the Ca-4Mn-5O cluster of the oxygen-evolving complex. It may also provide a ligand for a Cl- that is required for oxygen evolution. PSII binds additional chlorophylls, carotenoids and specific lipids. as a cofactor.

The protein localises to the plastid. The protein resides in the chloroplast thylakoid membrane. Functionally, one of the components of the core complex of photosystem II (PSII). It binds chlorophyll and helps catalyze the primary light-induced photochemical processes of PSII. PSII is a light-driven water:plastoquinone oxidoreductase, using light energy to abstract electrons from H(2)O, generating O(2) and a proton gradient subsequently used for ATP formation. In Daucus carota (Wild carrot), this protein is Photosystem II CP43 reaction center protein.